Reading from the N-terminus, the 487-residue chain is Cysteine--tRNA ligase (487 aa).

Cys-30 is a binding site for Zn(2+). The 'HIGH' region motif lies at Pro-32 to His-42. Zn(2+)-binding residues include Cys-226, His-251, and Glu-255. The short motif at Lys-283 to Ser-287 is the 'KMSKS' region element. ATP is bound at residue Lys-286.

The protein belongs to the class-I aminoacyl-tRNA synthetase family. Monomer. The cofactor is Zn(2+).

The protein localises to the cytoplasm. The enzyme catalyses tRNA(Cys) + L-cysteine + ATP = L-cysteinyl-tRNA(Cys) + AMP + diphosphate. This chain is Cysteine--tRNA ligase (cysS), found in Chlorobaculum tepidum (strain ATCC 49652 / DSM 12025 / NBRC 103806 / TLS) (Chlorobium tepidum).